Consider the following 431-residue polypeptide: Glutamate--tRNA ligase 1 (431 aa).

Residues 6 to 16 (PSPTGDMHIGN) carry the 'HIGH' region motif. The 'KMSKS' region motif lies at 235–239 (KMSKR). Lys-238 is a binding site for ATP.

This sequence belongs to the class-I aminoacyl-tRNA synthetase family. Glutamate--tRNA ligase type 1 subfamily. In terms of assembly, monomer.

It localises to the cytoplasm. It carries out the reaction tRNA(Glu) + L-glutamate + ATP = L-glutamyl-tRNA(Glu) + AMP + diphosphate. In terms of biological role, catalyzes the attachment of glutamate to tRNA(Glu) in a two-step reaction: glutamate is first activated by ATP to form Glu-AMP and then transferred to the acceptor end of tRNA(Glu). The sequence is that of Glutamate--tRNA ligase 1 from Campylobacter jejuni subsp. jejuni serotype O:23/36 (strain 81-176).